Consider the following 302-residue polypeptide: Decaprenyl-phosphate phosphoribosyltransferase (302 aa).

K28 serves as a coordination point for 5-phospho-alpha-D-ribose 1-diphosphate. The next 2 helical transmembrane spans lie at 30-50 (VLVLAAPLAALGGGVRYDYVE) and 55-75 (VSMAFVVFSLAASAVYLVNDV). Y70 serves as a coordination point for 5-phospho-alpha-D-ribose 1-diphosphate. N73 and D77 together coordinate Mg(2+). Position 87 (K87) interacts with 5-phospho-alpha-D-ribose 1-diphosphate. Helical transmembrane passes span 100 to 120 (WLAYTVAVVLGVTSLAGAWML) and 122 to 142 (PNLALVMVVYLAMQLAYCFGL). 5-phospho-alpha-D-ribose 1-diphosphate is bound by residues K143 and R160. The next 2 helical transmembrane spans lie at 146-166 (AVVEICVVSSAYLIRAIAGGV) and 170-190 (IPLSKWFLLIMAFGSLFMVAG). Residue K191 participates in trans,octa-cis-decaprenyl phosphate binding. The next 3 helical transmembrane spans lie at 218–238 (LRFVWTLSATAVVLCYGLWAF), 244–264 (SGSWFAVSMIPFTIAILRYAV), and 282–302 (RVLQLLALAWIATVGAAVAFG).

This sequence belongs to the UbiA prenyltransferase family. DPPR synthase subfamily. In terms of assembly, homotrimer. Mg(2+) serves as cofactor.

Its subcellular location is the cell inner membrane. It catalyses the reaction trans,octa-cis-decaprenyl phosphate + 5-phospho-alpha-D-ribose 1-diphosphate + H(+) = trans,octa-cis-decaprenylphospho-beta-D-ribofuranose 5-phosphate + diphosphate. It functions in the pathway cell wall biogenesis; cell wall polysaccharide biosynthesis. In terms of biological role, involved in the biosynthesis of decaprenylphosphoryl arabinose (DPA) a precursor for arabinan synthesis in mycobacterial cell wall biosynthesis. Catalyzes the transfer of a 5-phosphoribosyl residue from phosphoribose diphosphate (PRPP) to decaprenyl phosphate (DP) to form decaprenylphosphoryl-5-phosphoribose (DPPR). The protein is Decaprenyl-phosphate phosphoribosyltransferase of Mycobacterium tuberculosis (strain CDC 1551 / Oshkosh).